An 831-amino-acid polypeptide reads, in one-letter code: Multiphosphoryl transfer protein (831 aa).

In terms of domain architecture, HPr spans 1–90; that stretch reads MLTIQFLCPL…EYIQVRFIDS (90 aa). Catalysis depends on His-15, which acts as the Pros-phosphohistidine intermediate; for HPr activity. A Phosphohistidine; by EI modification is found at His-15. The segment at 119-650 is PTS EI; the sequence is GNVLASGVGV…AVKSQLRQLD (532 aa). His-298 functions as the Tele-phosphohistidine intermediate; for PTS EI activity in the catalytic mechanism. At His-298 the chain carries Phosphohistidine; by autocatalysis. Phosphoenolpyruvate contacts are provided by Arg-405 and Arg-441. Glu-540 and Asp-564 together coordinate Mg(2+). Phosphoenolpyruvate contacts are provided by residues 563 to 564 and Arg-574; that span reads ND. Cys-611 (proton donor; for EI activity) is an active-site residue. Positions 685 to 828 constitute a PTS EIIA type-2 domain; sequence PLLALENIFV…QSILTLLETE (144 aa). Residue His-747 is the Tele-phosphohistidine intermediate; for PTS EIIA activity of the active site. At His-747 the chain carries Phosphohistidine; by HPr.

This sequence belongs to the PEP-utilizing enzyme family. It depends on Mg(2+) as a cofactor.

It is found in the cytoplasm. It carries out the reaction L-histidyl-[protein] + phosphoenolpyruvate = N(pros)-phospho-L-histidyl-[protein] + pyruvate. The catalysed reaction is D-fructose(out) + N(pros)-phospho-L-histidyl-[protein] = D-fructose 1-phosphate(in) + L-histidyl-[protein]. In terms of biological role, multifunctional protein that includes general (non sugar-specific) and sugar-specific components of the phosphoenolpyruvate-dependent sugar phosphotransferase system (sugar PTS). This major carbohydrate active transport system catalyzes the phosphorylation of incoming sugar substrates concomitantly with their translocation across the cell membrane. The enzyme II FryABC PTS system is involved in fructose transport. In Escherichia coli O6:H1 (strain CFT073 / ATCC 700928 / UPEC), this protein is Multiphosphoryl transfer protein (fryA).